Consider the following 49-residue polypeptide: MRVHITMECTECHERSYLSNKNKRNNPDRLELKKYCPRERKVTLHRETK.

It belongs to the bacterial ribosomal protein bL33 family.

The chain is Large ribosomal subunit protein bL33A from Latilactobacillus sakei subsp. sakei (strain 23K) (Lactobacillus sakei subsp. sakei).